The primary structure comprises 345 residues: Heat-inducible transcription repressor HrcA (345 aa).

Belongs to the HrcA family.

Its function is as follows. Negative regulator of class I heat shock genes (grpE-dnaK-dnaJ and groELS operons). Prevents heat-shock induction of these operons. The protein is Heat-inducible transcription repressor HrcA of Dehalococcoides mccartyi (strain ATCC BAA-2100 / JCM 16839 / KCTC 5957 / BAV1).